A 205-amino-acid chain; its full sequence is Large ribosomal subunit protein uL3c (205 aa).

Positions 127-153 (HFSRGPMSHGSKNHRQPGSIGAGTTPG) are disordered.

It belongs to the universal ribosomal protein uL3 family. Part of the 50S ribosomal subunit.

It localises to the plastid. The protein resides in the chloroplast. One of the primary rRNA binding proteins, it binds directly near the 3'-end of the 23S rRNA, where it nucleates assembly of the 50S subunit. The protein is Large ribosomal subunit protein uL3c (rpl3) of Porphyra purpurea (Red seaweed).